The chain runs to 435 residues: uncharacterized protein (435 aa).

A run of 9 helical transmembrane segments spans residues 40-60, 103-123, 133-153, 195-215, 226-246, 313-333, 358-378, 381-401, and 414-434; these read LVSTWLVVWGIWHVYFVEAVF, VLWTSITVWLIALAVVVWLIL, IMLALLVPVLPFAFSYAIYNP, LIHEAIPLEFALGAVLAIIVL, ICTALAIGPGTVSVLLLAVVG, VAVVGFRALFGAFLLGLLFFV, LALPVLASALLVPLFITAVDW, WWVMITLDVAIVYILYAIDRP, and VFVCVVLVLAVIPTGSANNIG.

It is found in the cell membrane. This is an uncharacterized protein from Mycobacterium bovis (strain ATCC BAA-935 / AF2122/97).